The chain runs to 648 residues: Solute carrier family 23 member 2 (648 aa).

Residues 1–21 (MMGIGKNTASKSVEAGGSTEG) are disordered. Over 9-110 (ASKSVEAGGS…LCIFLGLQHY (102 aa)) the chain is Cytoplasmic. Ser70 is subject to Phosphoserine. Residue Thr75 is modified to Phosphothreonine. At Ser78 the chain carries Phosphoserine. Phosphothreonine is present on Thr79. A Phosphoserine modification is found at Ser81. Residues 111 to 131 (LTCFSGTIAVPFLLADAMCVG) traverse the membrane as a helical segment. Over 132–139 (DDQWATSQ) the chain is Extracellular. Residues 140-160 (LIGTIFFCVGITTLLQTTFGC) traverse the membrane as a helical segment. Arg161 is a topological domain (cytoplasmic). A helical membrane pass occupies residues 162 to 182 (LPLFQASAFAFLAPARAILSL). Residues 183–216 (DKWKCNTTEITVANGTAELLEHIWHPRIQEIQGA) are Extracellular-facing. N-linked (GlcNAc...) asparagine glycans are attached at residues Asn188 and Asn196. Residues 217–237 (IIMSSLIEVVIGLLGLPGALL) traverse the membrane as a helical segment. Over 238–264 (RYIGPLTITPTVALIGLSGFQAAGERA) the chain is Cytoplasmic. The helical transmembrane segment at 265–282 (GKHWGIAMLTIFLVLLFS) threads the bilayer. Residues 283-286 (QYAR) are Extracellular-facing. The helical intramembrane region spans 287–300 (NVKFPLPIYKSKKG). Over 301 to 307 (WTAYKFQ) the chain is Extracellular. Residues 308–328 (LFKMFPIILAILVSWLLCFIF) form a helical membrane-spanning segment. Over 329–369 (TVTDVFPSNSTDYGYYARTDARKGVLLVAPWFKVPYPFQWG) the chain is Cytoplasmic. A helical transmembrane segment spans residues 370–390 (MPTVSAAGVIGMLSAVVASII). The Extracellular segment spans residues 391–415 (ESIGDYYACARLSCAPPPPIHAINR). The chain crosses the membrane as a helical span at residues 416-436 (GIFVEGLSCVLDGIFGTGNGS). Topologically, residues 437–459 (TSSSPNIGVLGITKVGSRRVIQY) are cytoplasmic. The chain crosses the membrane as a helical span at residues 460 to 480 (GAALMLGLGMVGKFSALFASL). Over 481–483 (PDP) the chain is Extracellular. Residues 484 to 504 (VLGALFCTLFGMITAVGLSNL) form a helical membrane-spanning segment. Topologically, residues 505 to 514 (QFIDLNSSRN) are cytoplasmic. A helical membrane pass occupies residues 515 to 535 (LFVLGFSIFFGLVLPSYLRQN). Residues 536–545 (PLVTGITGID) are Extracellular-facing. A helical transmembrane segment spans residues 546-566 (QILNVLLTTAMFVGGCVAFIL). The Cytoplasmic segment spans residues 567-648 (DNTIPGTPEE…SSDKDSQATV (82 aa)). A Phosphothreonine modification is found at Thr647.

The protein belongs to the nucleobase:cation symporter-2 (NCS2) (TC 2.A.40) family. In terms of assembly, interacts with CLSTN3. In terms of processing, phosphorylated. In terms of tissue distribution, expressed in metabolically active and specialized tissues, including high expression in brain and adrenals. Detected in a wide range of tissues. Expression in kidney is almost undetectable.

The protein localises to the cell membrane. The enzyme catalyses L-ascorbate(out) + 2 Na(+)(out) = L-ascorbate(in) + 2 Na(+)(in). Its function is as follows. Sodium/ascorbate cotransporter. Mediates electrogenic uptake of vitamin C, with a stoichiometry of 2 Na(+) for each ascorbate. This is Solute carrier family 23 member 2 (Slc23a2) from Mus musculus (Mouse).